The following is a 700-amino-acid chain: Glycine--tRNA ligase beta subunit (700 aa).

This sequence belongs to the class-II aminoacyl-tRNA synthetase family. In terms of assembly, tetramer of two alpha and two beta subunits.

The protein resides in the cytoplasm. The catalysed reaction is tRNA(Gly) + glycine + ATP = glycyl-tRNA(Gly) + AMP + diphosphate. The polypeptide is Glycine--tRNA ligase beta subunit (Magnetococcus marinus (strain ATCC BAA-1437 / JCM 17883 / MC-1)).